Consider the following 153-residue polypeptide: SKP1-like protein 9 (153 aa).

Positions 95 to 153 (IKAANYLNIKSLFDLACQTVAEIIKGNTPEQIREFFNIENDLTPEEEAAIRRENKWAFE) are interaction with the F-box domain of F-box proteins.

The protein belongs to the SKP1 family. In terms of assembly, part of a SCF (SKP1-cullin-F-box) protein ligase complex. Interacts with CPR1/CPR30 and At3g61590. Expressed in leaves, shoot apical meristem (SAM), roots, flowers and pollen.

The protein resides in the nucleus. The protein operates within protein modification; protein ubiquitination. In terms of biological role, involved in ubiquitination and subsequent proteasomal degradation of target proteins. Together with CUL1, RBX1 and a F-box protein, it forms a SCF E3 ubiquitin ligase complex. The functional specificity of this complex depends on the type of F-box protein. In the SCF complex, it serves as an adapter that links the F-box protein to CUL1. In Arabidopsis thaliana (Mouse-ear cress), this protein is SKP1-like protein 9 (ASK9).